A 261-amino-acid chain; its full sequence is uncharacterized protein (261 aa).

It belongs to the BtpA family.

This is an uncharacterized protein from Thermococcus kodakarensis (strain ATCC BAA-918 / JCM 12380 / KOD1) (Pyrococcus kodakaraensis (strain KOD1)).